Here is a 372-residue protein sequence, read N- to C-terminus: MDRDKILLTPGPLTTTLRTKLAMLKDWGSWDTDFNAVTASVRRSLLDIIHGHDSHVVVPLQGSGTFSVEAAVATLVPHDGHVLVLDNGAYCKRAVRLTQLMGRRCTVLPFDEAAPVSAAALADQLKADASISHVILIHCETGAGVLNPLQEVADVCAAHGKGLIVDAMSSFAALEIDARKVRFDALVAASGKCLEGVPGMGFVFIRKAILEGCAGRSQSLAMDLYDQYIYMEKTTQWRFTPPTHVVVALAEAIAQFEEEGGQPARLARYQRNYSTLITGMARLGFRPFLDPAIQAPIIVTFHAPADSRYEFKRFYASARERGFVLYPGKLTQVETFRVGCIGAIGPREMEQAVHAIAGALQDMGISSAAPAH.

N6-(pyridoxal phosphate)lysine is present on Lys-192.

It belongs to the class-V pyridoxal-phosphate-dependent aminotransferase family. PhnW subfamily. Homodimer. Requires pyridoxal 5'-phosphate as cofactor.

The enzyme catalyses (2-aminoethyl)phosphonate + pyruvate = phosphonoacetaldehyde + L-alanine. Its function is as follows. Involved in phosphonate degradation. The protein is 2-aminoethylphosphonate--pyruvate transaminase 2 of Polaromonas sp. (strain JS666 / ATCC BAA-500).